The primary structure comprises 276 residues: Large ribosomal subunit protein uL2 (276 aa).

The disordered stretch occupies residues 219–276 (TVRGSVMNPNDHPHGGGEGRAPIGRKSPMSPWGKPTLGYKTRQRNKPSDKYIVRKRKK).

This sequence belongs to the universal ribosomal protein uL2 family. Part of the 50S ribosomal subunit. Forms a bridge to the 30S subunit in the 70S ribosome.

One of the primary rRNA binding proteins. Required for association of the 30S and 50S subunits to form the 70S ribosome, for tRNA binding and peptide bond formation. It has been suggested to have peptidyltransferase activity; this is somewhat controversial. Makes several contacts with the 16S rRNA in the 70S ribosome. In Oceanobacillus iheyensis (strain DSM 14371 / CIP 107618 / JCM 11309 / KCTC 3954 / HTE831), this protein is Large ribosomal subunit protein uL2.